Consider the following 204-residue polypeptide: Outer-membrane lipoprotein LolB (204 aa).

The first 20 residues, 1–20 (MLRSRRLALLCLATPLWLAA), serve as a signal peptide directing secretion. Cysteine 21 carries N-palmitoyl cysteine lipidation. Cysteine 21 carries S-diacylglycerol cysteine lipidation. A disordered region spans residues 131-150 (GRAAPGTPSNVTRDANGRPD).

The protein belongs to the LolB family. Monomer.

The protein resides in the cell outer membrane. Functionally, plays a critical role in the incorporation of lipoproteins in the outer membrane after they are released by the LolA protein. The protein is Outer-membrane lipoprotein LolB of Cupriavidus metallidurans (strain ATCC 43123 / DSM 2839 / NBRC 102507 / CH34) (Ralstonia metallidurans).